A 466-amino-acid chain; its full sequence is Asparagine--tRNA ligase (466 aa).

The protein belongs to the class-II aminoacyl-tRNA synthetase family. As to quaternary structure, homodimer.

It is found in the cytoplasm. It carries out the reaction tRNA(Asn) + L-asparagine + ATP = L-asparaginyl-tRNA(Asn) + AMP + diphosphate + H(+). This chain is Asparagine--tRNA ligase, found in Vibrio parahaemolyticus serotype O3:K6 (strain RIMD 2210633).